Consider the following 860-residue polypeptide: MQEQYRPEDIESNVQLHWQEKQTFKVTEDASKEKYYCLSMLPYPSGRLHMGHVRNYTIGDVISRYQRMLGKNVLQPIGWDAFGLPAEGAAVKNNTAPAPWTYDNIEYMKNQLKLLGFGYDWDREIATCDPDYYRWEQWFFTKLYEKGLVYKKTSAVNWCPHDLTVLANEQVIDGCCWRCDTKVERKEIPQWFIKITDYADQLLNDLDTLESWPEQVKTMQRNWIGRSEGVDITFDVAGSDEKLTVYTTRPDTFMGATYVAVAAGHPLAQQGAVNNPALAEFIEECRNTKVAEAEMATMEKKGMPTGLFAIHPLSGEQVPVWVANFVLMEYGTGAVMAVPAHDQRDWEFATKYGLPIKPVVLALDGSQPDVQAEAMTEKGTLFNSGEFDGLDHQDGFNAIADKLVAKGVGQRKVNYRLRDWGVSRQRYWGAPIPMVTLEDGTVMPTPEDQLPVILPEDVVMDGITSPIKADPEWAKTTVNGQPALRETDTFDTFMESSWYYARYTCPQYDKGMLDPAAANYWLPVDQYVGGIEHAIMHLMYFRFFHKLLRDAGLVDSDEPAKRLLCQGMVLADAFYYSGNSGERVWVSPADAIVERDDKGRIIKATDPQGRELVYAGMSKMSKSKNNGIDPQVMVEKYGADTVRLFMMFASPAEMTLEWQESGVEGANRFLKRVWKLSYEHLEKGAVQPLNVATLTEDQKALRRDLHKTIAKVTDDIGRRQTFNTAIAAVMELMNKLARAPQESEQDRALLQEALLAVVRMLYPFTPHVCFSLWQALGGEGDVDTAAWPQADEQAMVEDSKLVVVQVNGKVRAKITVAADATEEQVRARAAEEHLVAKYLDGVTVRKVIYVPGKLLNLVVG.

The 'HIGH' region motif lies at 42 to 52 (PYPSGRLHMGH). Residues 619-623 (KMSKS) carry the 'KMSKS' region motif. Lys-622 contacts ATP.

This sequence belongs to the class-I aminoacyl-tRNA synthetase family.

The protein resides in the cytoplasm. It catalyses the reaction tRNA(Leu) + L-leucine + ATP = L-leucyl-tRNA(Leu) + AMP + diphosphate. In Serratia proteamaculans (strain 568), this protein is Leucine--tRNA ligase.